Consider the following 486-residue polypeptide: Histone acetyltransferase type B catalytic subunit DDB_G0274269 (486 aa).

Positions aspartate 27–aspartate 69 form a coiled coil. Residues asparagine 33–aspartate 50 show a composition bias toward basic and acidic residues. A disordered region spans residues asparagine 33–threonine 78. An N-acetyltransferase domain is found at valine 189–tyrosine 386. Acetyl-CoA-binding positions include tyrosine 260–isoleucine 262 and glutamine 267–lysine 273. Catalysis depends on glutamate 299, which acts as the Proton donor/acceptor. The stretch at aspartate 392 to leucine 481 forms a coiled coil.

Belongs to the HAT1 family.

The enzyme catalyses L-lysyl-[protein] + acetyl-CoA = N(6)-acetyl-L-lysyl-[protein] + CoA + H(+). In Dictyostelium discoideum (Social amoeba), this protein is Histone acetyltransferase type B catalytic subunit DDB_G0274269.